The sequence spans 133 residues: Glycophorin-A (133 aa).

Residues threonine 1 and threonine 6 are each glycosylated (O-linked (GalNAc...) threonine). The interval threonine 1–valine 34 is disordered. The Extracellular segment spans residues threonine 1–glutamate 62. An O-linked (GalNAc...) serine glycan is attached at serine 11. Residue threonine 13 is glycosylated (O-linked (GalNAc...) threonine). A glycan (N-linked (GlcNAc...) asparagine) is linked at asparagine 19. O-linked (GalNAc...) threonine glycans are attached at residues threonine 21, threonine 23, and threonine 30. An O-linked (GalNAc...) serine glycan is attached at serine 31. N-linked (GlcNAc...) asparagine glycosylation is present at asparagine 39. Threonine 41 and threonine 48 each carry an O-linked (GalNAc...) threonine glycan. A helical transmembrane segment spans residues isoleucine 63–isoleucine 85. Over arginine 86–serine 133 the chain is Cytoplasmic. Positions leucine 93–serine 133 are disordered.

The protein belongs to the glycophorin-A family. As to quaternary structure, homodimer. Component of the ankyrin-1 complex in the erythrocyte, composed of ANK1, RHCE, RHAG, SLC4A1, EPB42, GYPA, GYPB and AQP1. Interacts with SLC4A1; a GYPA monomer is bound at each end of the SLC4A1 dimer forming a heterotetramer.

The protein localises to the membrane. Its function is as follows. Component of the ankyrin-1 complex, a multiprotein complex involved in the stability and shape of the erythrocyte membrane. Glycophorin A is the major intrinsic membrane protein of the erythrocyte. The N-terminal glycosylated segment, which lies outside the erythrocyte membrane, has MN blood group receptors. Appears to be important for the function of SLC4A1 and is required for high activity of SLC4A1. May be involved in translocation of SLC4A1 to the plasma membrane. This chain is Glycophorin-A, found in Sus scrofa (Pig).